Here is a 296-residue protein sequence, read N- to C-terminus: 4-hydroxy-tetrahydrodipicolinate synthase (296 aa).

Residue T49 coordinates pyruvate. Catalysis depends on Y137, which acts as the Proton donor/acceptor. Residue K166 is the Schiff-base intermediate with substrate of the active site. I208 contributes to the pyruvate binding site.

Belongs to the DapA family. In terms of assembly, homotetramer; dimer of dimers.

The protein localises to the cytoplasm. It carries out the reaction L-aspartate 4-semialdehyde + pyruvate = (2S,4S)-4-hydroxy-2,3,4,5-tetrahydrodipicolinate + H2O + H(+). It functions in the pathway amino-acid biosynthesis; L-lysine biosynthesis via DAP pathway; (S)-tetrahydrodipicolinate from L-aspartate: step 3/4. Its function is as follows. Catalyzes the condensation of (S)-aspartate-beta-semialdehyde [(S)-ASA] and pyruvate to 4-hydroxy-tetrahydrodipicolinate (HTPA). The polypeptide is 4-hydroxy-tetrahydrodipicolinate synthase (Chlorobium phaeobacteroides (strain DSM 266 / SMG 266 / 2430)).